We begin with the raw amino-acid sequence, 181 residues long: CASP-like protein 1F1 (181 aa).

The Cytoplasmic segment spans residues 1–18 (MPNNEAKFSVNQPLKTQK). A helical transmembrane segment spans residues 19 to 39 (LFIGVQIFFRIVAIAASVASS). Residues 40–70 (WLMITSKQVIDIGGIVLDARYSYSPEFKFLA) are Extracellular-facing. Residues 71 to 91 (FTNIVVGCFSLLSLLFLVLVV) form a helical membrane-spanning segment. The Cytoplasmic segment spans residues 92–100 (RQGSNPNHY). A helical transmembrane segment spans residues 101-121 (FFLFLHDLAMMSLVVGGCAAA). The Extracellular portion of the chain corresponds to 122 to 152 (TTVGFLGKHGNSHTGWMQICDNFGKFCNRAQ). A helical transmembrane segment spans residues 153-173 (TSVTISYLNLICLSILTITSA). Residues 174 to 181 (SKSRKMEA) lie on the Cytoplasmic side of the membrane.

It belongs to the Casparian strip membrane proteins (CASP) family. In terms of assembly, homodimer and heterodimers.

The protein localises to the cell membrane. The protein is CASP-like protein 1F1 of Populus trichocarpa (Western balsam poplar).